The chain runs to 590 residues: (+)-sabinene synthase, chloroplastic (590 aa).

The transit peptide at M1 to I51 directs the protein to the chloroplast. D343, D347, D487, T491, and E495 together coordinate Mg(2+). The DDXXD motif signature appears at D343–D347.

The protein belongs to the terpene synthase family. In terms of assembly, monomer. Requires Mg(2+) as cofactor.

Its subcellular location is the plastid. It is found in the chloroplast. It carries out the reaction (2E)-geranyl diphosphate = (1R,5R)-sabinene + diphosphate. The protein operates within terpene metabolism; sabinene hydrate biosynthesis. Catalyzes the formation of the (-)-3-isothujone precursor sabinene from geranyl diphosphate. The enzyme also produces significant amounts of gamma-terpinene, terpinolene and limonene. The chain is (+)-sabinene synthase, chloroplastic from Salvia officinalis (Sage).